The following is a 495-amino-acid chain: ATP synthase subunit beta, chloroplastic (495 aa).

172-179 is an ATP binding site; sequence GGAGVGKT.

The protein belongs to the ATPase alpha/beta chains family. As to quaternary structure, F-type ATPases have 2 components, CF(1) - the catalytic core - and CF(0) - the membrane proton channel. CF(1) has five subunits: alpha(3), beta(3), gamma(1), delta(1), epsilon(1). CF(0) has four main subunits: a(1), b(1), b'(1) and c(9-12).

It localises to the plastid. It is found in the chloroplast thylakoid membrane. It catalyses the reaction ATP + H2O + 4 H(+)(in) = ADP + phosphate + 5 H(+)(out). Its function is as follows. Produces ATP from ADP in the presence of a proton gradient across the membrane. The catalytic sites are hosted primarily by the beta subunits. The chain is ATP synthase subunit beta, chloroplastic from Convallaria majalis (Lily of the valley).